A 362-amino-acid polypeptide reads, in one-letter code: Transcription factor Sox-7 (362 aa).

Residues 19–41 (MDGDLSDGLSPHRSPREKGSETR) form a disordered region. The span at 32 to 41 (SPREKGSETR) shows a compositional bias: basic and acidic residues. A DNA-binding region (HMG box) is located at residues 42-110 (IRRPMNAFMV…QHMQDYPNYK (69 aa)). The Sox C-terminal domain maps to 246 to 362 (QPGSSMIPPV…ATYYNSYSVS (117 aa)).

In terms of tissue distribution, localized to the vegetal hemisphere of blastula embryos. Tissue-specific expression in early neurula (stage 13-14) embryos begins in the ciliate cells of the epidermis. Starting about stage 24, expression is found in a lateral stripe on each side of the embryo, with expression extending more posteriorly as development proceeds. Expressed in embryonic vasculature, as well as in the procardia tube, endocardium, notochord and hindbrain. As development proceeds, strong expression is seen in the hindbrain, posterior cardinal veins, aortic arch, stomodeal depression, epithelium and intersomitic arteries of stage 33/34 larvae. Expressed in posterior rhombomeres. By stage 40 larvae, expression in most of the vascular endothelia disappears, in particular in the posterior cardinal vein, but expression continues in the hindbrain. Expressed in a wide range of adult tissues, including ovary, testis, kidney, bladder, duodenum and liver.

The protein localises to the nucleus. Transcription factor. Binds to the DNA sequence 5'-AACAAT-3'. Acts downstream of vegt and upstream of nodal signaling to promote endodermal and mesodermal differentiation by promoting vegt-induced expression of both endodermal genes (including endodermin) and mesodermal genes (including snai1/snail and snai2/slug). Induces expression of multiple nodal genes (including nodal, nodal2, nodal4, nodal5 and nodal6) and binds directly to sites within the promoter of the nodal5 gene. The endodermal and mesodermal specification pathways then interact to initiate cardiogenesis. Acts partially redundantly with sox18 during cardiogenesis. Also acts as an antagonist of beta-catenin signaling. Regulates (possibly indirectly) development of the pronephros, the functional larval kidney. In Xenopus laevis (African clawed frog), this protein is Transcription factor Sox-7 (sox7).